The primary structure comprises 406 residues: Peptidase T (406 aa).

Position 81 (H81) interacts with Zn(2+). The active site involves D83. D142 contributes to the Zn(2+) binding site. The Proton acceptor role is filled by E176. Zn(2+) contacts are provided by E177, D199, and H381.

This sequence belongs to the peptidase M20B family. Zn(2+) is required as a cofactor.

It is found in the cytoplasm. It carries out the reaction Release of the N-terminal residue from a tripeptide.. Its function is as follows. Cleaves the N-terminal amino acid of tripeptides. This chain is Peptidase T, found in Streptococcus suis (strain 98HAH33).